The sequence spans 310 residues: Aspartate carbamoyltransferase catalytic subunit (310 aa).

Arg-55 and Thr-56 together coordinate carbamoyl phosphate. Lys-83 lines the L-aspartate pocket. Arg-105, His-133, and Gln-136 together coordinate carbamoyl phosphate. L-aspartate is bound by residues Arg-166 and Arg-220. Gly-261 and Pro-262 together coordinate carbamoyl phosphate.

The protein belongs to the aspartate/ornithine carbamoyltransferase superfamily. ATCase family. As to quaternary structure, heterododecamer (2C3:3R2) of six catalytic PyrB chains organized as two trimers (C3), and six regulatory PyrI chains organized as three dimers (R2).

The enzyme catalyses carbamoyl phosphate + L-aspartate = N-carbamoyl-L-aspartate + phosphate + H(+). It participates in pyrimidine metabolism; UMP biosynthesis via de novo pathway; (S)-dihydroorotate from bicarbonate: step 2/3. Its function is as follows. Catalyzes the condensation of carbamoyl phosphate and aspartate to form carbamoyl aspartate and inorganic phosphate, the committed step in the de novo pyrimidine nucleotide biosynthesis pathway. This chain is Aspartate carbamoyltransferase catalytic subunit, found in Chlorobium phaeovibrioides (strain DSM 265 / 1930) (Prosthecochloris vibrioformis (strain DSM 265)).